The chain runs to 620 residues: Chaperone protein HscA homolog (620 aa).

Belongs to the heat shock protein 70 family.

Functionally, chaperone involved in the maturation of iron-sulfur cluster-containing proteins. Has a low intrinsic ATPase activity which is markedly stimulated by HscB. In Shewanella woodyi (strain ATCC 51908 / MS32), this protein is Chaperone protein HscA homolog.